The sequence spans 831 residues: Prickle-like protein 1 (831 aa).

The PET domain occupies 14 to 122 (FGCQRSSTSD…TIKLLSRAMM (109 aa)). 3 consecutive LIM zinc-binding domains span residues 124 to 189 (AVCE…LLKP), 189 to 249 (PRCS…LYAE), and 249 to 313 (EYCE…EDIH). A disordered region spans residues 314–346 (ASDSSDSAFQSARSRDSRRSVRMGRSSRSADQC). Residues Ser-315, Ser-591, and Ser-594 each carry the phosphoserine modification. Disordered stretches follow at residues 664 to 688 (EERG…NALN) and 763 to 831 (CSSS…CIIS). Positions 669–680 (RPHHHRHRRSRK) are enriched in basic residues. Ser-683 bears the Phosphoserine mark. Over residues 797 to 812 (DLSSPASALPTPQFNQ) the composition is skewed to polar residues. Basic residues predominate over residues 815 to 831 (TKSKKKKGHRGKNCIIS). Position 828 is a cysteine methyl ester (Cys-828). A lipid anchor (S-farnesyl cysteine) is attached at Cys-828. A propeptide spans 829 to 831 (IIS) (removed in mature form).

This sequence belongs to the prickle / espinas / testin family. In terms of assembly, interacts with REST.

The protein resides in the nucleus membrane. Its subcellular location is the cytoplasm. The protein localises to the cytosol. In terms of biological role, involved in the planar cell polarity pathway that controls convergent extension during gastrulation and neural tube closure. Convergent extension is a complex morphogenetic process during which cells elongate, move mediolaterally, and intercalate between neighboring cells, leading to convergence toward the mediolateral axis and extension along the anteroposterior axis. Necessary for nuclear localization of REST. May serve as nuclear receptor. The protein is Prickle-like protein 1 (Prickle1) of Rattus norvegicus (Rat).